An 89-amino-acid chain; its full sequence is Small ribosomal subunit protein uS19 (89 aa).

It belongs to the universal ribosomal protein uS19 family.

In terms of biological role, protein S19 forms a complex with S13 that binds strongly to the 16S ribosomal RNA. The chain is Small ribosomal subunit protein uS19 from Porphyromonas gingivalis (strain ATCC 33277 / DSM 20709 / CIP 103683 / JCM 12257 / NCTC 11834 / 2561).